The primary structure comprises 648 residues: Calpain-5 (648 aa).

The region spanning 28–353 (PFVDTLFPPT…FTDISLCQLF (326 aa)) is the Calpain catalytic domain. Active-site residues include Cys83, His252, and Asn290. The segment at 354–509 (NTSVFSFSRS…VYSDEHIHFS (156 aa)) is domain III. The region spanning 502 to 625 (SDEHIHFSPL…ENRDTTLQLT (124 aa)) is the C2 domain.

The protein belongs to the peptidase C2 family. Requires Ca(2+) as cofactor. As to expression, expressed in neuronal, but not in GABA-ergic neurons, intestinal, hypodermal and excretory tissues.

In terms of biological role, required for the correct female sexual development of the soma and germline in hermaphrodite animals, while being fully dispensable in males. Has calcium-dependent proteolytic activity and is involved in the cleavage of tra-2, for which it acts as a potentiator. Capable of calcium-dependent autolysis. Part of the necrosis cell death pathway. Required for necrosis of intestinal cells induced by B.thuringiensis endotoxin Cry6Aa. The sequence is that of Calpain-5 from Caenorhabditis elegans.